The chain runs to 64 residues: Large ribosomal subunit protein bL33 (64 aa).

Over residues 16–25 the composition is skewed to basic and acidic residues; sequence EARTSSEPRR. Residues 16-39 form a disordered region; it reads EARTSSEPRRSNGISRYTTEKNKR.

The protein belongs to the bacterial ribosomal protein bL33 family.

This is Large ribosomal subunit protein bL33 from Prochlorococcus marinus (strain MIT 9515).